Reading from the N-terminus, the 495-residue chain is Glutamyl-tRNA(Gln) amidotransferase subunit A (495 aa).

Catalysis depends on charge relay system residues Lys78 and Ser158. Ser182 functions as the Acyl-ester intermediate in the catalytic mechanism.

The protein belongs to the amidase family. GatA subfamily. In terms of assembly, heterotrimer of A, B and C subunits.

It carries out the reaction L-glutamyl-tRNA(Gln) + L-glutamine + ATP + H2O = L-glutaminyl-tRNA(Gln) + L-glutamate + ADP + phosphate + H(+). In terms of biological role, allows the formation of correctly charged Gln-tRNA(Gln) through the transamidation of misacylated Glu-tRNA(Gln) in organisms which lack glutaminyl-tRNA synthetase. The reaction takes place in the presence of glutamine and ATP through an activated gamma-phospho-Glu-tRNA(Gln). The polypeptide is Glutamyl-tRNA(Gln) amidotransferase subunit A (Roseobacter denitrificans (strain ATCC 33942 / OCh 114) (Erythrobacter sp. (strain OCh 114))).